The primary structure comprises 473 residues: Arginine biosynthesis bifunctional protein ArgJ, mitochondrial (473 aa).

Substrate is bound by residues Thr201, Lys230, Thr241, Glu328, Asn468, and Thr473. The active-site Nucleophile is the Thr241.

The protein belongs to the ArgJ family. In terms of assembly, heterodimer of an alpha and a beta chain. Post-translationally, the alpha and beta chains are autoproteolytically processed from a single precursor protein within the mitochondrion.

It is found in the mitochondrion matrix. The catalysed reaction is N(2)-acetyl-L-ornithine + L-glutamate = N-acetyl-L-glutamate + L-ornithine. The enzyme catalyses L-glutamate + acetyl-CoA = N-acetyl-L-glutamate + CoA + H(+). It participates in amino-acid biosynthesis; L-arginine biosynthesis; L-ornithine and N-acetyl-L-glutamate from L-glutamate and N(2)-acetyl-L-ornithine (cyclic): step 1/1. Its pathway is amino-acid biosynthesis; L-arginine biosynthesis; N(2)-acetyl-L-ornithine from L-glutamate: step 1/4. Functionally, catalyzes two activities which are involved in the cyclic version of arginine biosynthesis: the synthesis of acetylglutamate from glutamate and acetyl-CoA, and of ornithine by transacetylation between acetylornithine and glutamate. This Paracoccidioides brasiliensis (strain Pb18) protein is Arginine biosynthesis bifunctional protein ArgJ, mitochondrial.